A 104-amino-acid polypeptide reads, in one-letter code: Large ribosomal subunit protein bL21 (104 aa).

Belongs to the bacterial ribosomal protein bL21 family. Part of the 50S ribosomal subunit. Contacts protein L20.

In terms of biological role, this protein binds to 23S rRNA in the presence of protein L20. The chain is Large ribosomal subunit protein bL21 from Desulfosudis oleivorans (strain DSM 6200 / JCM 39069 / Hxd3) (Desulfococcus oleovorans).